The chain runs to 510 residues: Cytochrome P450 90D2 (510 aa).

The helical transmembrane segment at 6 to 26 threads the bilayer; it reads MVGSGGVYSWPAALLVAAIVV. Cysteine 444 contacts heme.

The protein belongs to the cytochrome P450 family. Heme serves as cofactor.

It localises to the membrane. It catalyses the reaction 3-epi-6-deoxocathasterone + reduced [NADPH--hemoprotein reductase] + O2 = 6-deoxotyphasterol + oxidized [NADPH--hemoprotein reductase] + H2O + H(+). It carries out the reaction (22S,24R)-22-hydroxy-5alpha-ergostan-3-one + reduced [NADPH--hemoprotein reductase] + O2 = 3-dehydro-6-deoxoteasterone + oxidized [NADPH--hemoprotein reductase] + H2O + H(+). The enzyme catalyses 6-deoxycathasterone + reduced [NADPH--hemoprotein reductase] + O2 = 6-deoxoteasterone + oxidized [NADPH--hemoprotein reductase] + H2O + H(+). Its pathway is plant hormone biosynthesis; brassinosteroid biosynthesis. Its function is as follows. Involved in reduction steps of the biosynthesis of plant campesterol-derivative steroids, ending to castasterone (CS) but missing brassinolide (BL). Catalyzes the conversion of (22S,24R)-22-hydroxy-5alpha-ergostan-3-one (22-hydroxy-campesta-3-one, 22-OH-3-one) to 3-dehydro-6-deoxoteasterone (6-deoxo3DT, 6-deoxo-3-DHT), 3-epi-6-deoxocathasterone (3-epi-6-deoxoCT) to 6-deoxotyphasterol (6-deoxoTY) and of 6-deoxocathasterone (6-deoxoCT) to 6-deoxoteasterone (6-deoxoTE). The chain is Cytochrome P450 90D2 from Brachypodium distachyon (Purple false brome).